A 117-amino-acid chain; its full sequence is Large ribosomal subunit protein bL19 (117 aa).

This sequence belongs to the bacterial ribosomal protein bL19 family.

Functionally, this protein is located at the 30S-50S ribosomal subunit interface and may play a role in the structure and function of the aminoacyl-tRNA binding site. The polypeptide is Large ribosomal subunit protein bL19 (Shewanella woodyi (strain ATCC 51908 / MS32)).